Consider the following 65-residue polypeptide: Large ribosomal subunit protein uL29 (65 aa).

Belongs to the universal ribosomal protein uL29 family.

The protein is Large ribosomal subunit protein uL29 of Lactobacillus helveticus (strain DPC 4571).